Reading from the N-terminus, the 220-residue chain is UPF0319 protein YccT (220 aa).

A signal peptide spans 1–20; the sequence is MKTGALATFLALCLPVTVFA.

It belongs to the UPF0319 family.

This is UPF0319 protein YccT from Salmonella paratyphi A (strain ATCC 9150 / SARB42).